A 545-amino-acid polypeptide reads, in one-letter code: Toxin BC_0920 (545 aa).

One can recognise an LXG domain in the interval 1–217 (MSLNMYLGEV…ARQAANSIEE (217 aa)).

The protein in the N-terminal section; belongs to the LXG family. In the C-terminal section; belongs to the bacterial EndoU family. Probably interacts with cognate immunity protein BC_0921. The interaction inhibits the toxic activity of BC_0921.

The protein resides in the secreted. In terms of biological role, toxic component of an LXG toxin-immunity module. The C-terminus (residues 322-545) has RNase activity in E.coli which is neutralized by cognate immunity protein BC_0921, but not by immunity proteins specific to other toxins with the LXG domain. Degrades 5S rRNA and several tRNAs in vitro; cleavage is endonucleolytic within the anticodon loop for tRNA(GAU-Ile) and tRNA(UUC-Glu) but total for 5S rRNA and at least one other tRNA. RNase activity is suppressed by cognate immunity protein BC_0921. This is Toxin BC_0920 from Bacillus cereus (strain ATCC 14579 / DSM 31 / CCUG 7414 / JCM 2152 / NBRC 15305 / NCIMB 9373 / NCTC 2599 / NRRL B-3711).